A 332-amino-acid polypeptide reads, in one-letter code: Tetraacyldisaccharide 4'-kinase (332 aa).

ATP is bound at residue 60–67 (TVGGTGKT).

It belongs to the LpxK family.

It carries out the reaction a lipid A disaccharide + ATP = a lipid IVA + ADP + H(+). It participates in glycolipid biosynthesis; lipid IV(A) biosynthesis; lipid IV(A) from (3R)-3-hydroxytetradecanoyl-[acyl-carrier-protein] and UDP-N-acetyl-alpha-D-glucosamine: step 6/6. In terms of biological role, transfers the gamma-phosphate of ATP to the 4'-position of a tetraacyldisaccharide 1-phosphate intermediate (termed DS-1-P) to form tetraacyldisaccharide 1,4'-bis-phosphate (lipid IVA). In Pseudomonas paraeruginosa (strain DSM 24068 / PA7) (Pseudomonas aeruginosa (strain PA7)), this protein is Tetraacyldisaccharide 4'-kinase.